The following is a 687-amino-acid chain: C-mannosyltransferase dpy-19 (687 aa).

The next 11 helical transmembrane spans lie at 24–44, 170–190, 191–211, 223–243, 253–273, 276–296, 303–323, 324–344, 347–367, 415–435, and 454–474; these read GISGNLWLATVVLIGLFVGFL, ITGVFVVAGTVATSLFYLGVL, VSDSIFGGILSVLCFAFNHGE, ESFAFPFIIGHIAILTYIIKY, LLISAAVPALLFWQFTQFAFF, ICSIFAAFSMDLVPLDTAKTI, AFFISFVMLFGNEMMIAALYF, PSIWALATVIYISPMLAGIRL, LYLLILALIFGSITLGLKVGF, LSSTLLIPLALLSIGAFSWDF, and GEVIYNLVQLICSTTMAVLIM.

Belongs to the dpy-19 family.

The protein localises to the endoplasmic reticulum membrane. In terms of biological role, C-mannosyltransferase that mediates C-mannosylation of tryptophan residues on target proteins such as unc-5 and mig-21. Mediates the attachment of alpha-mannose in C-C linkage to the C2 of the indole ring of tryptophan. C-mannosylation takes place in the endoplasmic reticulum and frequently found in thrombospondin (TSP) type-1 repeats and in the WSXWS motif of type I cytokine receptors. Required to orient neuroblasts QL and QR correctly on the anterior/posterior (A/P) axis: QL and QR are born in the same A/P position, but polarize and migrate left/right asymmetrically, QL migrates toward the posterior and QR migrates toward the anterior. Required with unc-40 to express mab-5 correctly in the Q cell descendants. The protein is C-mannosyltransferase dpy-19 of Caenorhabditis briggsae.